The sequence spans 252 residues: Glycerol-3-phosphate acyltransferase (252 aa).

6 consecutive transmembrane segments (helical) span residues 6 to 26, 66 to 86, 104 to 124, 140 to 160, 164 to 184, and 204 to 224; these read SVAMAYILTLIISPLYSYLIG, ILTLFLDIVKPIITISLTYII, AILVYFGGIFTIIGHCYPIFF, ITIDPIVAVIGIITLLIILLI, MSLSAMITATITCFLVLIPGI, and VIKGTWYVWLFLLISASILIY.

The protein belongs to the PlsY family. Probably interacts with PlsX.

The protein localises to the cell membrane. The enzyme catalyses an acyl phosphate + sn-glycerol 3-phosphate = a 1-acyl-sn-glycero-3-phosphate + phosphate. It functions in the pathway lipid metabolism; phospholipid metabolism. Functionally, catalyzes the transfer of an acyl group from acyl-phosphate (acyl-PO(4)) to glycerol-3-phosphate (G3P) to form lysophosphatidic acid (LPA). This enzyme utilizes acyl-phosphate as fatty acyl donor, but not acyl-CoA or acyl-ACP. The protein is Glycerol-3-phosphate acyltransferase of Ureaplasma urealyticum serovar 10 (strain ATCC 33699 / Western).